We begin with the raw amino-acid sequence, 496 residues long: Protein TOO MANY MOUTHS (496 aa).

The first 23 residues, 1-23 (MARYEFFRQIFIVLSIVSPLVRS), serve as a signal peptide directing secretion. At 24–473 (FTVITSDSTA…ATDVSSTSKS (450 aa)) the chain is on the extracellular side. LRR repeat units follow at residues 158 to 182 (GSSLQTLVLRENGFLGPIPDELGNL), 183 to 208 (TNLKVLDLHKNHLNGSIPLSFNRFSG), 210 to 228 (RSLDLSGNRLTGSIPGFVL), 229 to 252 (PALSVLDLNQNLLTGPVPPTLTSC), 254 to 276 (SLIKIDLSRNRVTGPIPESINRL), 277 to 300 (NQLVLLDLSYNRLSGPFPSSLQGL), 302 to 325 (SLQALMLKGNTKFSTTIPENAFKG), 326 to 350 (LKNLMILVLSNTNIQGSIPKSLTRL), 351 to 373 (NSLRVLHLEGNNLTGEIPLEFRD), and 375 to 401 (KHLSELRLNDNSLTGPVPFERDTVWRM). Residues N181 and N196 are each glycosylated (N-linked (GlcNAc...) asparagine). N362 carries an N-linked (GlcNAc...) asparagine glycan. A disordered region spans residues 438–464 (AETSRPAPSGTVQHLSREEDGALPDGA). A helical membrane pass occupies residues 474-494 (LGFSYLSAFFLVFPNFIFMLI). Topologically, residues 495–496 (SS) are cytoplasmic.

The protein belongs to the RLP family. In terms of assembly, forms heterodimer with ERECTA or ERL1 through their extracellular domains. Not able to form homodimer. Interacts with EPF2 but not with EPF1. Interacts with SERK1, SERK2, SERK3/BAK1 and SERK4. Interacts with EPFL9/STOMAGEN. In epidermal cells of developing shoots and leaves, but not in roots. Expressed in the stomatal cell lineage in the developing epidermis. Accumulates strongly in meristemoid mother cells (MMC) and meristemoids, somewhat less in meristemoid sister cells (stomatal-lineage ground cells, SLGC), and is barely detected in pavement cells.

It localises to the cell membrane. Functionally, promotes cell fate progression in stomatal development. In leaves, needed to correctly orient spacing divisions, to limit the number of asymmetric divisions in neighbor cells, and to promote the asymmetric (amplifying) divisions of meristemoids. In stems, promotes the conversion of meristemoids into guard mother cells (GMC). Positively regulates CAPRICE (CPC) expression in differentiating stomaless-forming cell files. Forms constitutive complexes with ERECTA and ERL1 involved in the recognition of the stomatal regulatory peptides EPF1, EPF2 and EPFL9/STOMAGEN. Modulates the activity of the ligand-receptor pairs EPF2-ERECTA and EPF1-ERL1 in stomatal development. Functions in a combinatorial specific manner with the ERECTA-family (ERf) receptor kinases in the regulation of the immune response. The protein is Protein TOO MANY MOUTHS of Arabidopsis thaliana (Mouse-ear cress).